The sequence spans 280 residues: Myelin proteolipid protein A (280 aa).

At 1–10 (MGWHDGCIRC) the chain is on the cytoplasmic side. S-palmitoyl cysteine attachment occurs at residues Cys-7 and Cys-10. Residues 11-36 (MVGVPFASVIATVLCFAGVALFCGCG) form a helical membrane-spanning segment. At 37–59 (HEALSGTEKLIETYFSKNYQEYE) the chain is on the extracellular side. A helical membrane pass occupies residues 60-88 (YLIHVINAFQYVIYGIAIFFFLFGILLLA). Topologically, residues 89 to 152 (EGFYTTTAIK…LGKWLGHPDK (64 aa)) are cytoplasmic. 2 S-palmitoyl cysteine lipidation sites follow: Cys-140 and Cys-142. Residues 153-179 (FVGVTYIITILWILIFACSAVPVYIYF) traverse the membrane as a helical segment. Over 180–239 (NTWVTCQSIAFPGKTTTSVSTLCSDARMYGVLPWNAFPGKVCGTSLLAICKTSEFQMTFH) the chain is Extracellular. Cystine bridges form between Cys-185-Cys-229 and Cys-202-Cys-221. A helical transmembrane segment spans residues 240-269 (LFIAAFVGAAATLVALLTYMVGASFNYAVL). Residues 270–280 (RVTGRSDRSKF) lie on the Cytoplasmic side of the membrane.

Belongs to the myelin proteolipid protein family.

The protein localises to the cell membrane. In terms of biological role, this is the major myelin protein from the central nervous system. It plays an important role in the formation or maintenance of the multilamellar structure of myelin. The protein is Myelin proteolipid protein A (plp1-a) of Xenopus laevis (African clawed frog).